We begin with the raw amino-acid sequence, 196 residues long: Aequorin-1 (196 aa).

Residues 1-7 (MTSEQYS) constitute a propeptide that is removed on maturation. 4 consecutive EF-hand domains span residues 18 to 53 (KWIGRHKHMFNFLDVNHNGRISLDEMVYKASDIVIN), 54 to 108 (NLGA…SKNQ), 111 to 146 (LIRLWGDALFDIIDKDQNGAISLDEWKAYTKSDGII), and 147 to 182 (QSSEDCEETFRVCDIDESGQLDVDEMTRQHLGFWYT). Ca(2+) contacts are provided by aspartate 31, asparagine 33, asparagine 35, arginine 37, and glutamate 42. 3 may interact with the chromophore regions span residues 47–57 (ASDIVINNLGA), 62–72 (AKRHKDAVEAF), and 107–117 (NQITLIRLWGD). 9 residues coordinate Ca(2+): aspartate 124, aspartate 126, asparagine 128, glutamate 135, aspartate 160, aspartate 162, serine 164, glutamine 166, and glutamate 171.

Belongs to the aequorin family. The reduction of the disulfide bond is necessary to regenerate aequorin from apoaequorin.

In terms of biological role, ca(2+)-dependent bioluminescence photoprotein. Displays an emission peak at 470 nm (blue light). Trace amounts of calcium ion trigger the intramolecular oxidation of the chromophore, coelenterazine into coelenteramide and CO(2) with the concomitant emission of light. In Aequorea victoria (Water jellyfish), this protein is Aequorin-1.